The following is a 374-amino-acid chain: 2,7-anhydro-N-acetylneuraminate hydratase (374 aa).

Y13, F14, D35, N38, T70, N72, H75, E92, K93, W162, and K163 together coordinate NAD(+).

This sequence belongs to the Gfo/Idh/MocA family. In terms of assembly, homodimer. The cofactor is NAD(+).

It carries out the reaction N-acetyl-2,7-anhydro-alpha-neuraminate + H2O = N-acetyl-alpha-neuraminate. With respect to regulation, neu5Ac is produced in the presence of NAD(+) or NADH, but not in the presence of FAD. In terms of biological role, hydratase involved in the degradation of sialic acids, which are present in the host mucus layer and represent a much-coveted source of nutrients for R.gnavus, a prevalent member of the normal gut microbiota. Catalyzes the reversible conversion of the dehydrated form of N-acetylneuraminate (Neu5Ac), 2,7-anhydro-N-acetylneuraminate (2,7-AN), to Neu5Ac, allowing growth on 2,7-AN produced by the IT-sialidase NanH. Acts through a multistep mechanism involving a keto intermediate and cycling of NADH/NAD(+). This Mediterraneibacter gnavus (strain ATCC 29149 / DSM 114966 / JCM 6515 / VPI C7-9) (Ruminococcus gnavus) protein is 2,7-anhydro-N-acetylneuraminate hydratase.